The primary structure comprises 392 residues: MENVLIIRYGEIMLKGDNKSFFEAKLTKHIRGAVKDLGDVKVYKMHSRVYIDVEDFNADEIIERVKKVFGVVCISPAVRFPVDFDVIKETALNQIKEEMAQRGVKTFKVESKRVDKKFPLKSPEMSREIGGYILENTEGLEVDVHNPEVRVYVEVRECSFVFTKKVYGFGGLPLGTNGKALLLLSGGIDSPVAGWLVAKRGVEIHGMHFHSYPFTSERAKEKVVDLAKILTTYCGRIKLYSVNLLAIQKEINEKCPEEEMTILSRRFMMKIAERVANKIGCDALVTGESIGQVASQTVKGLHVTNAAVELPVFRPLIAMDKVDIMDLARKIDTYETSILPFEDCCTVFLPKRPVTQPRLEKILRSEALLDVEGLIESAIGDMEVERISLDDE.

The THUMP domain occupies Asp59 to Val166. Residues Leu183–Leu184, His208–Phe209, Arg265, Gly287, and Gln296 contribute to the ATP site.

The protein belongs to the ThiI family.

The protein resides in the cytoplasm. The enzyme catalyses [ThiI sulfur-carrier protein]-S-sulfanyl-L-cysteine + a uridine in tRNA + 2 reduced [2Fe-2S]-[ferredoxin] + ATP + H(+) = [ThiI sulfur-carrier protein]-L-cysteine + a 4-thiouridine in tRNA + 2 oxidized [2Fe-2S]-[ferredoxin] + AMP + diphosphate. It carries out the reaction [ThiS sulfur-carrier protein]-C-terminal Gly-Gly-AMP + S-sulfanyl-L-cysteinyl-[cysteine desulfurase] + AH2 = [ThiS sulfur-carrier protein]-C-terminal-Gly-aminoethanethioate + L-cysteinyl-[cysteine desulfurase] + A + AMP + 2 H(+). It participates in cofactor biosynthesis; thiamine diphosphate biosynthesis. Functionally, catalyzes the ATP-dependent transfer of a sulfur to tRNA to produce 4-thiouridine in position 8 of tRNAs, which functions as a near-UV photosensor. Also catalyzes the transfer of sulfur to the sulfur carrier protein ThiS, forming ThiS-thiocarboxylate. This is a step in the synthesis of thiazole, in the thiamine biosynthesis pathway. The sulfur is donated as persulfide by IscS. This is Probable tRNA sulfurtransferase from Alkaliphilus metalliredigens (strain QYMF).